Reading from the N-terminus, the 147-residue chain is Hemoglobin subunit epsilon-M (147 aa).

The Globin domain occupies 3-147 (HFTPEDKTNI…VSSALGHKYH (145 aa)). Ser14 and Ser51 each carry phosphoserine. 2 residues coordinate heme b: His64 and His93.

This sequence belongs to the globin family. In terms of tissue distribution, red blood cells.

Hemoglobin epsilon chain is a beta-type chain found in early embryos. The polypeptide is Hemoglobin subunit epsilon-M (HBE1) (Didelphis virginiana (North American opossum)).